A 294-amino-acid chain; its full sequence is tRNA dimethylallyltransferase (294 aa).

10–17 (GPTAVGKT) serves as a coordination point for ATP. Position 12 to 17 (12 to 17 (TAVGKT)) interacts with substrate. The interval 35–38 (DSQQ) is interaction with substrate tRNA.

It belongs to the IPP transferase family. As to quaternary structure, monomer. Mg(2+) serves as cofactor.

It carries out the reaction adenosine(37) in tRNA + dimethylallyl diphosphate = N(6)-dimethylallyladenosine(37) in tRNA + diphosphate. Functionally, catalyzes the transfer of a dimethylallyl group onto the adenine at position 37 in tRNAs that read codons beginning with uridine, leading to the formation of N6-(dimethylallyl)adenosine (i(6)A). The polypeptide is tRNA dimethylallyltransferase (Streptococcus pneumoniae (strain Taiwan19F-14)).